We begin with the raw amino-acid sequence, 300 residues long: Bifunctional protein FolD (300 aa).

NADP(+) is bound by residues G168–S170, S193, and I234.

It belongs to the tetrahydrofolate dehydrogenase/cyclohydrolase family. In terms of assembly, homodimer.

The catalysed reaction is (6R)-5,10-methylene-5,6,7,8-tetrahydrofolate + NADP(+) = (6R)-5,10-methenyltetrahydrofolate + NADPH. It carries out the reaction (6R)-5,10-methenyltetrahydrofolate + H2O = (6R)-10-formyltetrahydrofolate + H(+). Its pathway is one-carbon metabolism; tetrahydrofolate interconversion. In terms of biological role, catalyzes the oxidation of 5,10-methylenetetrahydrofolate to 5,10-methenyltetrahydrofolate and then the hydrolysis of 5,10-methenyltetrahydrofolate to 10-formyltetrahydrofolate. This chain is Bifunctional protein FolD, found in Ehrlichia ruminantium (strain Gardel).